The sequence spans 1464 residues: Glutamate receptor ionotropic, NMDA 2A (1464 aa).

The N-terminal stretch at 1 to 22 is a signal peptide; that stretch reads MGRVGYWTLLVLPALLVWRGPA. Topologically, residues 23 to 556 are extracellular; sequence PSAAAEKGPP…SAFLEPFSAS (534 aa). His-44 is a binding site for Zn(2+). A glycan (N-linked (GlcNAc...) asparagine) is linked at Asn-75. Cys-87 and Cys-320 are oxidised to a cystine. 3 residues coordinate Zn(2+): His-128, Glu-266, and Asp-282. N-linked (GlcNAc...) asparagine glycans are attached at residues Asn-340, Asn-380, Asn-443, and Asn-444. Intrachain disulfides connect Cys-429–Cys-455 and Cys-436–Cys-456. L-glutamate contacts are provided by Ser-511, Thr-513, and Arg-518. An N-linked (GlcNAc...) asparagine glycan is attached at Asn-541. A helical transmembrane segment spans residues 557–576; it reads VWVMMFVMLLIVSAIAVFVF. The Cytoplasmic portion of the chain corresponds to 577–600; it reads EYFSPVGYNRNLAKGKAPHGPSFT. Residues 599–620 form a pore-forming region; it reads FTIGKAIWLLWGLVFNNSVPVQ. An intramembrane region (discontinuously helical) is located at residues 601–615; it reads IGKAIWLLWGLVFNN. Over 616–625 the chain is Cytoplasmic; the sequence is SVPVQNPKGT. A helical membrane pass occupies residues 626–646; the sequence is TSKIMVSVWAFFAVIFLASYT. The Extracellular portion of the chain corresponds to 647–814; sequence ANLAAFMIQE…NEVMSSQLDI (168 aa). Residue Asn-687 is glycosylated (N-linked (GlcNAc...) asparagine). L-glutamate is bound by residues Ser-689, Thr-690, and Asp-731. A disulfide bridge links Cys-745 with Cys-800. A helical transmembrane segment spans residues 815-835; sequence DNMAGVFYMLAAAMALSLITF. The Cytoplasmic portion of the chain corresponds to 836-1464; the sequence is IWEHLFYWKL…KKMPSIESDV (629 aa). Phosphoserine is present on residues Ser-882, Ser-890, and Ser-929. 2 stretches are compositionally biased toward polar residues: residues 1001-1010 and 1023-1032; these read STESKVNSRP and QDSLSQNPVS. Disordered regions lie at residues 1001–1088 and 1148–1180; these read STES…NFKR and PDPYQDPSENLRKGDSTLPMNRNPLQNEEGLSN. Residue Ser-1025 is modified to Phosphoserine. Composition is skewed to basic and acidic residues over residues 1033 to 1043 and 1052 to 1061; these read QRDEATAENRT and LPEEMAHSDI. Phosphoserine occurs at positions 1059 and 1062. Positions 1070 to 1087 are enriched in basic and acidic residues; the sequence is CHREPDNSKNPKTKDNFK. Over residues 1165–1180 the composition is skewed to polar residues; the sequence is LPMNRNPLQNEEGLSN. 2 positions are modified to phosphoserine: Ser-1198 and Ser-1291. The interval 1335 to 1372 is disordered; the sequence is KLSGKKSSLFPQGLEDSKRSKSLLPDHTSDNPFLHSHR. Residues 1462-1464 carry the PDZ-binding motif; it reads SDV.

The protein belongs to the glutamate-gated ion channel (TC 1.A.10.1) family. NR2A/GRIN2A subfamily. As to quaternary structure, heterotetramer. Forms heterotetrameric channels composed of two GluN1/zeta subunits (GRIN1), and two identical GluN2/epsilon subunits (GRIN2A, GRIN2B, GRIN2C or GRIN2D) or GluN3 subunits (GRIN3A or GRIN3B) (in vitro). Can also form heterotetrameric channels that contain at least two GluN1 subunits and at least two different GluN2 subunits (or a combination of one GluN2 and one GluN3 subunits) (in vitro). In vivo, the subunit composition may depend on the expression levels of the different subunits. Found in a complex with GRIN1, GRIN3A and PPP2CB. Found in a complex with GRIN1 and GRIN3B. Interacts with AIP1. Interacts with HIP1 and NETO1. Interacts with SNX27 (via PDZ domain); the interaction is required for recycling to the plasma membrane when endocytosed and prevent degradation in lysosomes. Interacts with PDZ domains of PATJ and DLG4. Interacts with LRFN2. Interacts with RPH3A and DLG4; this ternary complex regulates NMDA receptor composition at postsynaptic membranes. Interacts with SORCS2. Interacts with ARC; preventing ARC oligomerization. Interacts (via the extreme C-terminus) with FRMPD2 (the second PDZ domain); the interaction is direct and is likely to promote NMDAR-mediated neural signal transmission. GRIN2A binds FRMPD2 with lower affinity than GRIN2B.

Its subcellular location is the cell projection. It localises to the dendritic spine. The protein localises to the cell membrane. It is found in the synapse. The protein resides in the postsynaptic cell membrane. Its subcellular location is the cytoplasmic vesicle membrane. It catalyses the reaction Ca(2+)(in) = Ca(2+)(out). The catalysed reaction is Na(+)(in) = Na(+)(out). It carries out the reaction K(+)(in) = K(+)(out). In terms of biological role, component of N-methyl-D-aspartate (NMDA) receptors (NMDARs) that function as heterotetrameric, ligand-gated cation channels with high calcium permeability and voltage-dependent block by Mg(2+). NMDARs participate in synaptic plasticity for learning and memory formation by contributing to the slow phase of excitatory postsynaptic current, long-term synaptic potentiation, and learning. Channel activation requires binding of the neurotransmitter L-glutamate to the GluN2 subunit, glycine or D-serine binding to the GluN1 subunit, plus membrane depolarization to eliminate channel inhibition by Mg(2+). NMDARs mediate simultaneously the potasium efflux and the influx of calcium and sodium. Each GluN2 subunit confers differential attributes to channel properties, including activation, deactivation and desensitization kinetics, pH sensitivity, Ca2(+) permeability, and binding to allosteric modulators. Participates in the synaptic plasticity regulation through activation by the L-glutamate releaseed by BEST1, into the synaptic cleft, upon F2R/PAR-1 activation in astrocyte. The protein is Glutamate receptor ionotropic, NMDA 2A of Pan troglodytes (Chimpanzee).